The chain runs to 258 residues: Snake venom serine proteinase 5 (258 aa).

The first 18 residues, 1 to 18 (MVLIRVLANLLILQLSYA), serve as a signal peptide directing secretion. Residues 19 to 24 (QKSSEL) constitute a propeptide that is removed on maturation. The Peptidase S1 domain maps to 25–249 (VVGGDECNIN…YNDWIQSIIA (225 aa)). 6 disulfides stabilise this stretch: C31–C163, C50–C66, C98–C256, C142–C210, C174–C189, and C200–C225. A glycan (N-linked (GlcNAc...) asparagine) is linked at N44. Residues H65 and D110 each act as charge relay system in the active site. The active-site Charge relay system is the S204.

The protein belongs to the peptidase S1 family. Snake venom subfamily. In terms of assembly, monomer. As to expression, expressed by the venom gland.

The protein resides in the secreted. Its function is as follows. Snake venom serine protease that may act in the hemostasis system of the prey. This is Snake venom serine proteinase 5 from Crotalus adamanteus (Eastern diamondback rattlesnake).